The sequence spans 182 residues: Large ribosomal subunit protein uL6 (182 aa).

This sequence belongs to the universal ribosomal protein uL6 family. As to quaternary structure, part of the 50S ribosomal subunit.

This protein binds to the 23S rRNA, and is important in its secondary structure. It is located near the subunit interface in the base of the L7/L12 stalk, and near the tRNA binding site of the peptidyltransferase center. The chain is Large ribosomal subunit protein uL6 from Caldicellulosiruptor bescii (strain ATCC BAA-1888 / DSM 6725 / KCTC 15123 / Z-1320) (Anaerocellum thermophilum).